The primary structure comprises 477 residues: Myc-associated zinc finger protein (477 aa).

Disordered regions lie at residues A59–A78 and T121–A144. A compositionally biased stretch (pro residues) spans P130–V140. 4 C2H2-type zinc fingers span residues Y190–H212, H279–H301, Y307–H329, and Y337–H360. S361 is modified (phosphoserine). Residues F366–H388 form a C2H2-type 5 zinc finger. A C2H2-type 6; atypical zinc finger spans residues V392–H413.

Interacts with BPTF. As to expression, expressed in Purkinje cells in the brain (at protein level).

The protein resides in the nucleus. Functionally, transcriptional regulator. Acts as a transcriptional activator that binds to purine-rich GAGA sites found in the promoter of many genes including insulin I and II and islet amyloid polypeptide. This is Myc-associated zinc finger protein (Maz) from Mus musculus (Mouse).